Reading from the N-terminus, the 458-residue chain is PH domain-containing protein DDB_G0274775 (458 aa).

Positions 15–112 constitute a PH domain; sequence PSDREGWLTK…WMESIKRNLD (98 aa). The segment at 111–154 is disordered; that stretch reads LDGEGGMKSGGNDIVSSPKINSEPTPKVNQNGSAPEKSSLSSPR. The span at 124–142 shows a compositional bias: polar residues; that stretch reads IVSSPKINSEPTPKVNQNG. Low complexity predominate over residues 143-154; that stretch reads SAPEKSSLSSPR.

The protein is PH domain-containing protein DDB_G0274775 of Dictyostelium discoideum (Social amoeba).